Consider the following 223-residue polypeptide: ATP phosphoribosyltransferase (223 aa).

It belongs to the ATP phosphoribosyltransferase family. Short subfamily. In terms of assembly, heteromultimer composed of HisG and HisZ subunits.

It is found in the cytoplasm. The catalysed reaction is 1-(5-phospho-beta-D-ribosyl)-ATP + diphosphate = 5-phospho-alpha-D-ribose 1-diphosphate + ATP. Its pathway is amino-acid biosynthesis; L-histidine biosynthesis; L-histidine from 5-phospho-alpha-D-ribose 1-diphosphate: step 1/9. Its function is as follows. Catalyzes the condensation of ATP and 5-phosphoribose 1-diphosphate to form N'-(5'-phosphoribosyl)-ATP (PR-ATP). Has a crucial role in the pathway because the rate of histidine biosynthesis seems to be controlled primarily by regulation of HisG enzymatic activity. This is ATP phosphoribosyltransferase from Bordetella bronchiseptica (strain ATCC BAA-588 / NCTC 13252 / RB50) (Alcaligenes bronchisepticus).